A 488-amino-acid chain; its full sequence is DNA polymerase II small subunit (488 aa).

This sequence belongs to the DNA polymerase delta/II small subunit family. As to quaternary structure, heterodimer of a large subunit and a small subunit.

The catalysed reaction is DNA(n) + a 2'-deoxyribonucleoside 5'-triphosphate = DNA(n+1) + diphosphate. It carries out the reaction Exonucleolytic cleavage in the 3'- to 5'-direction to yield nucleoside 5'-phosphates.. In terms of biological role, possesses two activities: a DNA synthesis (polymerase) and an exonucleolytic activity that degrades single-stranded DNA in the 3' to 5' direction. Has a template-primer preference which is characteristic of a replicative DNA polymerase. The chain is DNA polymerase II small subunit (polB) from Archaeoglobus fulgidus (strain ATCC 49558 / DSM 4304 / JCM 9628 / NBRC 100126 / VC-16).